We begin with the raw amino-acid sequence, 260 residues long: MNQRPLVIKLGGAVLSSIDTLTLLFKTISNYQQQAKRSLIIVHGGGYLVDELMAKLQLETIKKEGLRVTPKDQIGYITGALAGTANKMLQGQAMKNNVKAIGLSLADGGLCQITQLNPELGNVGLATAGDAKVLEAILATQVTPIISSIGITNDGELMNVNADQAAVAVATALDADLVLLSDVPGVLDAEKQLIKSLDSAQAEMLIHQAVITDGMIVKVRAALDAAQELGRAIEVASWRSPEKLAELFIGNSIGTQFQPQ.

Substrate-binding positions include 45–46 (GG), Arg-67, and Asn-159.

This sequence belongs to the acetylglutamate kinase family. ArgB subfamily.

The protein localises to the cytoplasm. The enzyme catalyses N-acetyl-L-glutamate + ATP = N-acetyl-L-glutamyl 5-phosphate + ADP. It functions in the pathway amino-acid biosynthesis; L-arginine biosynthesis; N(2)-acetyl-L-ornithine from L-glutamate: step 2/4. Functionally, catalyzes the ATP-dependent phosphorylation of N-acetyl-L-glutamate. This Aliivibrio fischeri (strain ATCC 700601 / ES114) (Vibrio fischeri) protein is Acetylglutamate kinase.